The sequence spans 259 residues: Flagellar L-ring protein (259 aa).

The N-terminal stretch at 1–15 (MKRISLIALVTLMSG) is a signal peptide. Residue C16 is the site of N-palmitoyl cysteine attachment. A lipid anchor (S-diacylglycerol cysteine) is attached at C16.

It belongs to the FlgH family. As to quaternary structure, the basal body constitutes a major portion of the flagellar organelle and consists of four rings (L,P,S, and M) mounted on a central rod.

It localises to the cell outer membrane. It is found in the bacterial flagellum basal body. Its function is as follows. Assembles around the rod to form the L-ring and probably protects the motor/basal body from shearing forces during rotation. In Vibrio vulnificus (strain YJ016), this protein is Flagellar L-ring protein.